The chain runs to 184 residues: Ras-related protein O-Krev (184 aa).

Position 10–17 (Gly-10–Ser-17) interacts with GTP. The Effector region signature appears at Tyr-32 to Tyr-40. GTP is bound by residues Asp-57 to Thr-61 and Asn-116 to Asp-119. Position 181 is a cysteine methyl ester (Cys-181). The S-geranylgeranyl cysteine moiety is linked to residue Cys-181. A propeptide spans Thr-182–Leu-184 (removed in mature form).

It belongs to the small GTPase superfamily. Ras family.

The protein localises to the cell membrane. It catalyses the reaction GTP + H2O = GDP + phosphate + H(+). The chain is Ras-related protein O-Krev from Diplobatis ommata (Ocellated electric ray).